The following is a 268-amino-acid chain: Syntaxin-22 (268 aa).

The segment at Met1 to Asp23 is disordered. The residue at position 2 (Ser2) is an N-acetylserine. Residues Ser2–Ser246 are Cytoplasmic-facing. In terms of domain architecture, t-SNARE coiled-coil homology spans Glu175–Ala237. Residues Leu247–Ala267 traverse the membrane as a helical; Anchor for type IV membrane protein segment. A topological domain (vesicular) is located at residue Ala268.

This sequence belongs to the syntaxin family. As to quaternary structure, interacts with VTI11 and SYP51 to form a t-SNARE complex, but not with VPS45. As to expression, expressed in roots, leaves, stems, flower and green siliques.

It localises to the prevacuolar compartment membrane. The protein localises to the vacuole membrane. In terms of biological role, may provide the t-SNARE function in the vacuolar assembly. Promotes the formation of vacuolar membrane 'bulbs'. Required for inflorescence stem gravitropism. The protein is Syntaxin-22 (SYP22) of Arabidopsis thaliana (Mouse-ear cress).